Reading from the N-terminus, the 461-residue chain is UDP-N-acetylmuramate--L-alanine ligase (461 aa).

112–118 serves as a coordination point for ATP; sequence GTHGKTT.

Belongs to the MurCDEF family.

It localises to the cytoplasm. The catalysed reaction is UDP-N-acetyl-alpha-D-muramate + L-alanine + ATP = UDP-N-acetyl-alpha-D-muramoyl-L-alanine + ADP + phosphate + H(+). It participates in cell wall biogenesis; peptidoglycan biosynthesis. Its function is as follows. Cell wall formation. This Geobacter sp. (strain M21) protein is UDP-N-acetylmuramate--L-alanine ligase.